We begin with the raw amino-acid sequence, 263 residues long: 4-hydroxy-2-oxo-heptane-1,7-dioate aldolase (263 aa).

Catalysis depends on His-45, which acts as the Proton acceptor. Gln-147 contacts substrate. Glu-149 contacts a divalent metal cation. Ala-174 and Asp-175 together coordinate substrate. Asp-175 contributes to the a divalent metal cation binding site.

The protein belongs to the HpcH/HpaI aldolase family. Homohexamer; trimer of dimers. The cofactor is a divalent metal cation.

It carries out the reaction 4-hydroxy-2-oxoheptanedioate = succinate semialdehyde + pyruvate. It participates in aromatic compound metabolism; 4-hydroxyphenylacetate degradation; pyruvate and succinate semialdehyde from 4-hydroxyphenylacetate: step 7/7. Functionally, catalyzes the reversible retro-aldol cleavage of 4-hydroxy-2-ketoheptane-1,7-dioate (HKHD) to pyruvate and succinic semialdehyde. The chain is 4-hydroxy-2-oxo-heptane-1,7-dioate aldolase from Salmonella choleraesuis (strain SC-B67).